The following is a 119-amino-acid chain: Small ribosomal subunit protein uS13m (119 aa).

Belongs to the universal ribosomal protein uS13 family. Part of the small ribosomal subunit.

The protein resides in the mitochondrion. In terms of biological role, located at the top of the head of the small subunit, it contacts several helices of the small subunit rRNA. The sequence is that of Small ribosomal subunit protein uS13m (RPS13) from Prototheca wickerhamii.